A 305-amino-acid polypeptide reads, in one-letter code: Large ribosomal subunit protein uL2m (305 aa).

A mitochondrion-targeting transit peptide spans 1–60 (MALCALTRALRSLNLAPPTVAAPAPSLFPAAQMMNNGLLQQPSALMLLPCRPVLTSVALN). A disordered region spans residues 264–283 (RWLGKRPNSGRWHRKGGWAG). A compositionally biased stretch (basic residues) spans 274 to 283 (RWHRKGGWAG).

This sequence belongs to the universal ribosomal protein uL2 family. As to quaternary structure, component of the mitochondrial large ribosomal subunit (mt-LSU). Mature mammalian 55S mitochondrial ribosomes consist of a small (28S) and a large (39S) subunit. The 28S small subunit contains a 12S ribosomal RNA (12S mt-rRNA) and 30 different proteins. The 39S large subunit contains a 16S rRNA (16S mt-rRNA), a copy of mitochondrial valine transfer RNA (mt-tRNA(Val)), which plays an integral structural role, and 52 different proteins.

It localises to the mitochondrion. This Homo sapiens (Human) protein is Large ribosomal subunit protein uL2m (MRPL2).